The primary structure comprises 516 residues: Ribonuclease Y (516 aa).

A helical membrane pass occupies residues 1–21 (MLIKIVIACVITAIIVALIAW). Residues 206-269 (TISVVQLPND…ETARIALEKL (64 aa)) enclose the KH domain. One can recognise an HD domain in the interval 332–425 (ALKHSIEVAI…VQAADTISAA (94 aa)).

Belongs to the RNase Y family.

Its subcellular location is the cell membrane. In terms of biological role, endoribonuclease that initiates mRNA decay. The polypeptide is Ribonuclease Y (Lachnoclostridium phytofermentans (strain ATCC 700394 / DSM 18823 / ISDg) (Clostridium phytofermentans)).